A 202-amino-acid polypeptide reads, in one-letter code: Imidazoleglycerol-phosphate dehydratase (202 aa).

Belongs to the imidazoleglycerol-phosphate dehydratase family.

The protein localises to the cytoplasm. It carries out the reaction D-erythro-1-(imidazol-4-yl)glycerol 3-phosphate = 3-(imidazol-4-yl)-2-oxopropyl phosphate + H2O. It functions in the pathway amino-acid biosynthesis; L-histidine biosynthesis; L-histidine from 5-phospho-alpha-D-ribose 1-diphosphate: step 6/9. The sequence is that of Imidazoleglycerol-phosphate dehydratase from Chelativorans sp. (strain BNC1).